Consider the following 450-residue polypeptide: Chromosomal replication initiator protein DnaA (450 aa).

Residues 1–84 form a domain I, interacts with DnaA modulators region; that stretch reads MENIHDLWDR…AVKFIIPPNQ (84 aa). Positions 84-111 are domain II; it reads QDDEELEFQSSKKKQRKPYEETNDFPQS. Positions 89–108 are disordered; sequence LEFQSSKKKQRKPYEETNDF. The domain III, AAA+ region stretch occupies residues 112 to 328; sequence MLNPKYTFDT…GALIRVVAYS (217 aa). ATP-binding residues include Gly156, Gly158, Lys159, and Thr160. Positions 329-450 are domain IV, binds dsDNA; sequence SLINKEITAD…QEIQEKLKQL (122 aa).

The protein belongs to the DnaA family. In terms of assembly, oligomerizes as a right-handed, spiral filament on DNA at oriC.

The protein localises to the cytoplasm. In terms of biological role, plays an essential role in the initiation and regulation of chromosomal replication. ATP-DnaA binds to the origin of replication (oriC) to initiate formation of the DNA replication initiation complex once per cell cycle. Binds the DnaA box (a 9 base pair repeat at the origin) and separates the double-stranded (ds)DNA. Forms a right-handed helical filament on oriC DNA; dsDNA binds to the exterior of the filament while single-stranded (ss)DNA is stabiized in the filament's interior. The ATP-DnaA-oriC complex binds and stabilizes one strand of the AT-rich DNA unwinding element (DUE), permitting loading of DNA polymerase. After initiation quickly degrades to an ADP-DnaA complex that is not apt for DNA replication. Binds acidic phospholipids. The protein is Chromosomal replication initiator protein DnaA of Geobacillus kaustophilus (strain HTA426).